We begin with the raw amino-acid sequence, 221 residues long: Leucyl/phenylalanyl-tRNA--protein transferase (221 aa).

The protein belongs to the L/F-transferase family.

It is found in the cytoplasm. The catalysed reaction is N-terminal L-lysyl-[protein] + L-leucyl-tRNA(Leu) = N-terminal L-leucyl-L-lysyl-[protein] + tRNA(Leu) + H(+). It catalyses the reaction N-terminal L-arginyl-[protein] + L-leucyl-tRNA(Leu) = N-terminal L-leucyl-L-arginyl-[protein] + tRNA(Leu) + H(+). The enzyme catalyses L-phenylalanyl-tRNA(Phe) + an N-terminal L-alpha-aminoacyl-[protein] = an N-terminal L-phenylalanyl-L-alpha-aminoacyl-[protein] + tRNA(Phe). Functionally, functions in the N-end rule pathway of protein degradation where it conjugates Leu, Phe and, less efficiently, Met from aminoacyl-tRNAs to the N-termini of proteins containing an N-terminal arginine or lysine. The polypeptide is Leucyl/phenylalanyl-tRNA--protein transferase (Phenylobacterium zucineum (strain HLK1)).